We begin with the raw amino-acid sequence, 209 residues long: Uridine kinase (209 aa).

Position 12 to 19 (12 to 19 (GGTGSGKS)) interacts with ATP.

This sequence belongs to the uridine kinase family.

The protein localises to the cytoplasm. It catalyses the reaction uridine + ATP = UMP + ADP + H(+). The catalysed reaction is cytidine + ATP = CMP + ADP + H(+). The protein operates within pyrimidine metabolism; CTP biosynthesis via salvage pathway; CTP from cytidine: step 1/3. It functions in the pathway pyrimidine metabolism; UMP biosynthesis via salvage pathway; UMP from uridine: step 1/1. The chain is Uridine kinase from Clostridium tetani (strain Massachusetts / E88).